The chain runs to 76 residues: ATP synthase subunit c (76 aa).

2 helical membrane-spanning segments follow: residues 13–33 and 55–75; these read LSVIGYGIGTLGPGIGLGILF and FIGLALVEVLALIGFVAALII.

This sequence belongs to the ATPase C chain family. In terms of assembly, F-type ATPases have 2 components, F(1) - the catalytic core - and F(0) - the membrane proton channel. F(1) has five subunits: alpha(3), beta(3), gamma(1), delta(1), epsilon(1). F(0) has three main subunits: a(1), b(2) and c(10-14). The alpha and beta chains form an alternating ring which encloses part of the gamma chain. F(1) is attached to F(0) by a central stalk formed by the gamma and epsilon chains, while a peripheral stalk is formed by the delta and b chains.

The protein localises to the cell membrane. In terms of biological role, f(1)F(0) ATP synthase produces ATP from ADP in the presence of a proton or sodium gradient. F-type ATPases consist of two structural domains, F(1) containing the extramembraneous catalytic core and F(0) containing the membrane proton channel, linked together by a central stalk and a peripheral stalk. During catalysis, ATP synthesis in the catalytic domain of F(1) is coupled via a rotary mechanism of the central stalk subunits to proton translocation. Key component of the F(0) channel; it plays a direct role in translocation across the membrane. A homomeric c-ring of between 10-14 subunits forms the central stalk rotor element with the F(1) delta and epsilon subunits. This is ATP synthase subunit c from Bifidobacterium longum subsp. infantis (strain ATCC 15697 / DSM 20088 / JCM 1222 / NCTC 11817 / S12).